The primary structure comprises 391 residues: Phosphoglycerate kinase (391 aa).

Substrate-binding positions include 21 to 23 (DFN), R41, 64 to 67 (HLGR), R121, and R154. Residues K205, E322, and 348-351 (GGDS) contribute to the ATP site.

It belongs to the phosphoglycerate kinase family. As to quaternary structure, monomer.

The protein localises to the cytoplasm. It carries out the reaction (2R)-3-phosphoglycerate + ATP = (2R)-3-phospho-glyceroyl phosphate + ADP. It participates in carbohydrate degradation; glycolysis; pyruvate from D-glyceraldehyde 3-phosphate: step 2/5. The chain is Phosphoglycerate kinase from Solibacter usitatus (strain Ellin6076).